Reading from the N-terminus, the 226-residue chain is Uracil-DNA glycosylase (226 aa).

Catalysis depends on aspartate 64, which acts as the Proton acceptor.

Belongs to the uracil-DNA glycosylase (UDG) superfamily. UNG family.

Its subcellular location is the cytoplasm. The catalysed reaction is Hydrolyzes single-stranded DNA or mismatched double-stranded DNA and polynucleotides, releasing free uracil.. In terms of biological role, excises uracil residues from the DNA which can arise as a result of misincorporation of dUMP residues by DNA polymerase or due to deamination of cytosine. In Photorhabdus laumondii subsp. laumondii (strain DSM 15139 / CIP 105565 / TT01) (Photorhabdus luminescens subsp. laumondii), this protein is Uracil-DNA glycosylase.